Consider the following 662-residue polypeptide: Leucine aminopeptidase 2 (662 aa).

A peptide-binding positions include 178–180 and 304–309; these read QLE and PYGGME. Residue histidine 333 participates in Zn(2+) binding. The active-site Proton acceptor is glutamate 334. 2 residues coordinate Zn(2+): histidine 337 and glutamate 356. The Proton donor role is filled by tyrosine 422.

The protein belongs to the peptidase M1 family. Zn(2+) serves as cofactor.

The protein localises to the cytoplasm. It is found in the nucleus. The catalysed reaction is an epoxide + H2O = an ethanediol. Functionally, aminopeptidase that preferentially cleaves di- and tripeptides. Also has low epoxide hydrolase activity (in vitro). Can hydrolyze the epoxide leukotriene LTA(4) but it forms preferentially 5,6-dihydroxy-7,9,11,14-eicosatetraenoic acid rather than the cytokine leukotriene B(4) as the product compared to the homologous mammalian enzyme (in vitro). In Kluyveromyces lactis (strain ATCC 8585 / CBS 2359 / DSM 70799 / NBRC 1267 / NRRL Y-1140 / WM37) (Yeast), this protein is Leucine aminopeptidase 2.